The sequence spans 101 residues: MAKTSAVEKNKRRRTTVANQAAKRAALKAIIMNQALPIEERFKASIKLASLPRDGSKTRIRNRCEVSGRPRAYYRKLRMSRIALRELGNLGKVPGIVKSSW.

Belongs to the universal ribosomal protein uS14 family. Part of the 30S ribosomal subunit. Contacts proteins S3 and S10.

Its function is as follows. Binds 16S rRNA, required for the assembly of 30S particles and may also be responsible for determining the conformation of the 16S rRNA at the A site. In Rhizobium etli (strain CIAT 652), this protein is Small ribosomal subunit protein uS14.